A 141-amino-acid polypeptide reads, in one-letter code: Mite group 2 allergen Tyr p 2 (141 aa).

The N-terminal stretch at 1 to 15 (MKFLILFALVAVAAA) is a signal peptide. Disulfide bonds link Cys-23-Cys-132, Cys-36-Cys-41, and Cys-87-Cys-92. Asn-103 carries N-linked (GlcNAc...) asparagine glycosylation.

It belongs to the NPC2 family.

It is found in the secreted. The sequence is that of Mite group 2 allergen Tyr p 2 from Tyrophagus putrescentiae (Mold mite).